Consider the following 124-residue polypeptide: Putative calmodulin-3 (124 aa).

4 consecutive EF-hand domains span residues 1–18 (GCIT…LGQN), 19–54 (PTEA…KIKD), 56–91 (DFEE…LGEK), and 92–124 (LTDE…MMAK). Residues Cys2, Glu7, Asp32, Asp34, Asn36, Thr38, Glu43, Asp69, Asp71, Asn73, and Glu80 each coordinate Ca(2+). Position 91 is an N6,N6,N6-trimethyllysine (Lys91). Ca(2+) contacts are provided by Asp105, Asp107, Asp109, Gln111, and Glu116.

The protein belongs to the calmodulin family. As to expression, not detected in the organs tested.

Functionally, calmodulin mediates the control of a large number of enzymes, ion channels and other proteins by Ca(2+). Among the enzymes to be stimulated by the calmodulin-Ca(2+) complex are a number of protein kinases and phosphatases. The sequence is that of Putative calmodulin-3 (PCM3) from Solanum tuberosum (Potato).